A 501-amino-acid polypeptide reads, in one-letter code: Acetylcholine receptor subunit beta (501 aa).

The N-terminal stretch at 1–23 (MTPGALLMLLGALGAPLAPGVRG) is a signal peptide. Topologically, residues 24-244 (SEAEGRLREK…VIFYLIIRRK (221 aa)) are extracellular. Cysteines 151 and 165 form a disulfide. A glycan (N-linked (GlcNAc...) asparagine) is linked at N164. 3 helical membrane passes run 245–269 (PLFY…VFYL), 277–295 (MGLS…LLLA), and 311–332 (YLMF…VLNL). At 333–469 (HHRSPHTHQM…WQFVAMVVDR (137 aa)) the chain is on the cytoplasmic side. Y390 is modified (phosphotyrosine; by Tyr-kinases). Residues 470-488 (LFLWTFIIFTSVGTLVIFL) traverse the membrane as a helical segment.

It belongs to the ligand-gated ion channel (TC 1.A.9) family. Acetylcholine receptor (TC 1.A.9.1) subfamily. Beta-1/CHRNB1 sub-subfamily. Pentamer of two alpha chains, and one each of the beta, delta, and gamma (in immature muscle) or epsilon (in mature muscle) chains. The muscle heteropentamer composed of alpha-1, beta-1, delta, epsilon subunits interacts with the alpha-conotoxin ImII.

It localises to the postsynaptic cell membrane. The protein localises to the cell membrane. It catalyses the reaction K(+)(in) = K(+)(out). It carries out the reaction Na(+)(in) = Na(+)(out). Functionally, after binding acetylcholine, the AChR responds by an extensive change in conformation that affects all subunits and leads to opening of an ion-conducting channel across the plasma membrane. In Homo sapiens (Human), this protein is Acetylcholine receptor subunit beta.